The following is a 33-amino-acid chain: Photosystem II reaction center protein Psb30 (33 aa).

Residues V5–L25 traverse the membrane as a helical segment.

This sequence belongs to the Psb30/Ycf12 family. In terms of assembly, PSII is composed of 1 copy each of membrane proteins PsbA, PsbB, PsbC, PsbD, PsbE, PsbF, PsbH, PsbI, PsbJ, PsbK, PsbL, PsbM, PsbT, PsbX, PsbY, PsbZ, Psb30/Ycf12, peripheral proteins of the oxygen-evolving complex and a large number of cofactors. It forms dimeric complexes.

It is found in the plastid. The protein resides in the chloroplast thylakoid membrane. Functionally, a core subunit of photosystem II (PSII), probably helps stabilize the reaction center. This is Photosystem II reaction center protein Psb30 from Marchantia polymorpha (Common liverwort).